The sequence spans 114 residues: Transmembrane protein 14B (114 aa).

The next 4 helical transmembrane spans lie at 8 to 28, 34 to 54, 60 to 80, and 83 to 103; these read LVPLHWFGFGYTALVVSGGIV, GSVPSLAAGLLFGSLAGLGAY, PRNVWGFLAATSVTFVGVMGM, and YYYGKFMPVGLIAGASLLMAA.

It belongs to the TMEM14 family. Interacts with IQGAP1; this interaction promotes phosphorylation and nuclear translocation of IQGAP1. Mainly expressed in the outer subventricular zone (OSVZ) of the fetal brains.

The protein resides in the membrane. Primate-specific protein involved in cortical expansion and folding in the developing neocortex. May drive neural progenitor proliferation through nuclear translocation of IQGAP1, which in turn promotes G1/S cell cycle transitions. In Homo sapiens (Human), this protein is Transmembrane protein 14B (TMEM14B).